Here is a 292-residue protein sequence, read N- to C-terminus: MNNSQINLPLLKKGKVRDVYDAGKMLLIVASDRVSVFDCVLPSQIPDKGKILTQISNFWFAKTISIVPNHMISSDINEINIILKLGLDPQYYSGRTVLVKKCERIDFECVVRGYITGSAWKEYQKSGTVCGEKIKEGLKEAQKFPEPIFTPASKADTGHDENVSFAYMLSHMDKNLAYKIKDTSIKLYNFAEEYLKNCGIILADTKFEFGLIDGDLILIDEILTPDSSRFWDAALYKTGTNPPGFDKQFVRDYMEQTGWDKNPPPPAMPQSIALAAAKKYKEALSRIEKGSV.

Belongs to the SAICAR synthetase family.

The enzyme catalyses 5-amino-1-(5-phospho-D-ribosyl)imidazole-4-carboxylate + L-aspartate + ATP = (2S)-2-[5-amino-1-(5-phospho-beta-D-ribosyl)imidazole-4-carboxamido]succinate + ADP + phosphate + 2 H(+). The protein operates within purine metabolism; IMP biosynthesis via de novo pathway; 5-amino-1-(5-phospho-D-ribosyl)imidazole-4-carboxamide from 5-amino-1-(5-phospho-D-ribosyl)imidazole-4-carboxylate: step 1/2. The polypeptide is Phosphoribosylaminoimidazole-succinocarboxamide synthase (Elusimicrobium minutum (strain Pei191)).